A 688-amino-acid chain; its full sequence is Elongation factor G (688 aa).

The tr-type G domain maps to 6-280; that stretch reads KLFRNFGIMA…AVVDFLPSPI (275 aa). Residues 15–22, 79–83, and 133–136 each bind GTP; these read AHIDAGKT, DTPGH, and NKMD.

This sequence belongs to the TRAFAC class translation factor GTPase superfamily. Classic translation factor GTPase family. EF-G/EF-2 subfamily.

The protein resides in the cytoplasm. Functionally, catalyzes the GTP-dependent ribosomal translocation step during translation elongation. During this step, the ribosome changes from the pre-translocational (PRE) to the post-translocational (POST) state as the newly formed A-site-bound peptidyl-tRNA and P-site-bound deacylated tRNA move to the P and E sites, respectively. Catalyzes the coordinated movement of the two tRNA molecules, the mRNA and conformational changes in the ribosome. This Ureaplasma urealyticum serovar 10 (strain ATCC 33699 / Western) protein is Elongation factor G.